Reading from the N-terminus, the 388-residue chain is Formate-dependent phosphoribosylglycinamide formyltransferase (388 aa).

N(1)-(5-phospho-beta-D-ribosyl)glycinamide contacts are provided by residues 15–16 (EL) and E75. ATP is bound by residues R107, K148, 153-158 (SSGKGQ), 188-191 (EEFL), and E196. The ATP-grasp domain maps to 112 to 302 (DLASAELALL…EFELHLRAVL (191 aa)). Residues E261 and E273 each contribute to the Mg(2+) site. N(1)-(5-phospho-beta-D-ribosyl)glycinamide is bound by residues D280, K350, and 357 to 358 (RR).

Belongs to the PurK/PurT family. In terms of assembly, homodimer.

The catalysed reaction is N(1)-(5-phospho-beta-D-ribosyl)glycinamide + formate + ATP = N(2)-formyl-N(1)-(5-phospho-beta-D-ribosyl)glycinamide + ADP + phosphate + H(+). It functions in the pathway purine metabolism; IMP biosynthesis via de novo pathway; N(2)-formyl-N(1)-(5-phospho-D-ribosyl)glycinamide from N(1)-(5-phospho-D-ribosyl)glycinamide (formate route): step 1/1. Involved in the de novo purine biosynthesis. Catalyzes the transfer of formate to 5-phospho-ribosyl-glycinamide (GAR), producing 5-phospho-ribosyl-N-formylglycinamide (FGAR). Formate is provided by PurU via hydrolysis of 10-formyl-tetrahydrofolate. The chain is Formate-dependent phosphoribosylglycinamide formyltransferase from Prochlorococcus marinus (strain MIT 9313).